A 271-amino-acid polypeptide reads, in one-letter code: Phosphatidylinositol transfer protein beta isoform (271 aa).

Position 215 is an N6-acetyllysine (Lys-215). Ser-262 is subject to Phosphoserine.

The protein belongs to the PtdIns transfer protein family. PI transfer class I subfamily. Constitutive phosphorylation of Ser-262 has no effect on phospholipid transfer activity but is required for Golgi targeting. Widely expressed in various tissues including brain.

The protein localises to the golgi apparatus. It localises to the golgi apparatus membrane. It is found in the endoplasmic reticulum membrane. The enzyme catalyses a 1,2-diacyl-sn-glycero-3-phosphocholine(in) = a 1,2-diacyl-sn-glycero-3-phosphocholine(out). It catalyses the reaction a 1,2-diacyl-sn-glycero-3-phospho-(1D-myo-inositol)(in) = a 1,2-diacyl-sn-glycero-3-phospho-(1D-myo-inositol)(out). The catalysed reaction is an N-(acyl)-sphingosylphosphocholine(in) = an N-(acyl)-sphingosylphosphocholine(out). With respect to regulation, phosphatidylinositol transfer activity is inhibited by N-ethylmaleimide. Functionally, catalyzes the transfer of phosphatidylinositol and phosphatidylcholine between membranes. Also catalyzes the transfer of sphingomyelin. Required for COPI-mediated retrograde transport from the Golgi to the endoplasmic reticulum; phosphatidylinositol and phosphatidylcholine transfer activity is essential for this function. The protein is Phosphatidylinositol transfer protein beta isoform (PITPNB) of Homo sapiens (Human).